A 1391-amino-acid chain; its full sequence is DNA-directed RNA polymerase subunit beta (1391 aa).

Belongs to the RNA polymerase beta chain family. As to quaternary structure, the RNAP catalytic core consists of 2 alpha, 1 beta, 1 beta' and 1 omega subunit. When a sigma factor is associated with the core the holoenzyme is formed, which can initiate transcription.

The enzyme catalyses RNA(n) + a ribonucleoside 5'-triphosphate = RNA(n+1) + diphosphate. In terms of biological role, DNA-dependent RNA polymerase catalyzes the transcription of DNA into RNA using the four ribonucleoside triphosphates as substrates. This Paramagnetospirillum magneticum (strain ATCC 700264 / AMB-1) (Magnetospirillum magneticum) protein is DNA-directed RNA polymerase subunit beta.